Consider the following 401-residue polypeptide: Imidazolonepropionase (401 aa).

Fe(3+) is bound by residues H66 and H68. Positions 66 and 68 each coordinate Zn(2+). R75, Y138, and H171 together coordinate 4-imidazolone-5-propanoate. Residue Y138 participates in N-formimidoyl-L-glutamate binding. A Fe(3+)-binding site is contributed by H236. H236 is a Zn(2+) binding site. Q239 serves as a coordination point for 4-imidazolone-5-propanoate. D311 is a binding site for Fe(3+). D311 serves as a coordination point for Zn(2+). N313 and G315 together coordinate N-formimidoyl-L-glutamate. Position 316 (T316) interacts with 4-imidazolone-5-propanoate.

The protein belongs to the metallo-dependent hydrolases superfamily. HutI family. Requires Zn(2+) as cofactor. Fe(3+) serves as cofactor.

The protein localises to the cytoplasm. The enzyme catalyses 4-imidazolone-5-propanoate + H2O = N-formimidoyl-L-glutamate. It functions in the pathway amino-acid degradation; L-histidine degradation into L-glutamate; N-formimidoyl-L-glutamate from L-histidine: step 3/3. Functionally, catalyzes the hydrolytic cleavage of the carbon-nitrogen bond in imidazolone-5-propanoate to yield N-formimidoyl-L-glutamate. It is the third step in the universal histidine degradation pathway. The sequence is that of Imidazolonepropionase from Acinetobacter baumannii (strain ATCC 17978 / DSM 105126 / CIP 53.77 / LMG 1025 / NCDC KC755 / 5377).